Reading from the N-terminus, the 3084-residue chain is Protein prune homolog 2 (3084 aa).

Residue M1 is modified to N-acetylmethionine. The short motif at 109-111 (GSH) is the DHH motif element. Disordered stretches follow at residues 394–417 (QPSS…QADG), 430–465 (TIRS…PGFD), 500–536 (ASEQ…PKGL), 672–733 (EQES…QKEE), 811–837 (KNTW…MGQS), 861–907 (EIWG…KATG), 947–1080 (SASN…DDPS), 1224–1316 (NMPS…GQSE), 1338–1395 (SGVN…LEVE), 1502–1543 (MNST…DLHD), 1600–1652 (GFGK…TTKR), 1776–1799 (ETGT…DPDK), 1836–1886 (GELE…GDKS), 1961–1980 (DENG…QENQ), 2071–2196 (ILTH…NPEV), 2410–2782 (MLLS…SHPR), 2797–2816 (QSEG…EIDI), and 2825–2859 (DEAD…AEEE). The segment covering 501-511 (SEQSQPSSHSA) has biased composition (polar residues). Composition is skewed to basic and acidic residues over residues 682–696 (PWKD…RRTS) and 723–733 (GNKEAQDQKEE). 2 stretches are compositionally biased toward polar residues: residues 811 to 828 (KNTW…SGQE) and 865 to 891 (KNNS…NNSK). Low complexity predominate over residues 962–975 (TNYSTSDSYTSPTY). Over residues 977–999 (GDEKEIANKPVDKDNGFEAKDAE) the composition is skewed to basic and acidic residues. Positions 1009-1019 (ATSSQQSQRNR) are enriched in polar residues. The segment covering 1034–1063 (HTEDKPEGNDAHHPDSDALKTEHAEDKNAS) has biased composition (basic and acidic residues). The segment covering 1071–1080 (SSPSSYDDPS) has biased composition (low complexity). A compositionally biased stretch (basic and acidic residues) spans 1248–1261 (SPRHSNGKDSHMLE). The span at 1265-1294 (LSESGGLTSQPVNQDTWGDSQGDTASSVTG) shows a compositional bias: polar residues. Positions 1350–1366 (KPRDQEFSSSDAFEHQD) are enriched in basic and acidic residues. Residues 1368–1378 (SSASGKISSLS) show a composition bias toward low complexity. 3 stretches are compositionally biased toward polar residues: residues 1779–1792 (TMDT…STEA), 1854–1869 (PIQN…STNP), and 1965–1980 (CVST…QENQ). Positions 2089 to 2103 (VCHDSEGEQKMEKHT) are enriched in basic and acidic residues. Over residues 2162–2174 (SSKPASSRSSPEP) the composition is skewed to low complexity. Composition is skewed to basic and acidic residues over residues 2416 to 2428 (PDHR…ETNI), 2506 to 2525 (KQTE…EDHQ), and 2535 to 2553 (SHEK…RENI). The segment covering 2569–2584 (PETQLSGTPDTCQSEF) has biased composition (polar residues). A compositionally biased stretch (low complexity) spans 2595-2606 (RMSSSSNHESAS). The span at 2607–2617 (LENPAQDQSWM) shows a compositional bias: polar residues. The span at 2653-2664 (KGPKSQVLERNK) shows a compositional bias: basic and acidic residues. The segment covering 2806 to 2816 (DNLDSPDEIDI) has biased composition (acidic residues). The span at 2840 to 2849 (ANKSSGQESE) shows a compositional bias: polar residues. The CRAL-TRIO domain maps to 2879–3040 (DMKVIEPYRR…SIIKYDEEKS (162 aa)).

This sequence belongs to the PPase class C family. Prune subfamily.

The protein resides in the cytoplasm. Functionally, may play an important role in regulating differentiation, survival and aggressiveness of the tumor cells. In Mus musculus (Mouse), this protein is Protein prune homolog 2 (Prune2).